The primary structure comprises 119 residues: Large ribosomal subunit protein bL20 (119 aa).

It belongs to the bacterial ribosomal protein bL20 family.

Functionally, binds directly to 23S ribosomal RNA and is necessary for the in vitro assembly process of the 50S ribosomal subunit. It is not involved in the protein synthesizing functions of that subunit. The protein is Large ribosomal subunit protein bL20 of Delftia acidovorans (strain DSM 14801 / SPH-1).